Consider the following 691-residue polypeptide: Elongation factor G (691 aa).

The tr-type G domain maps to 8–283 (KRVRNIGIAA…AVVAYLPAPD (276 aa)). Residues 17–24 (AHIDAGKT), 81–85 (DTPGH), and 135–138 (NKMD) each bind GTP.

The protein belongs to the TRAFAC class translation factor GTPase superfamily. Classic translation factor GTPase family. EF-G/EF-2 subfamily.

Its subcellular location is the cytoplasm. In terms of biological role, catalyzes the GTP-dependent ribosomal translocation step during translation elongation. During this step, the ribosome changes from the pre-translocational (PRE) to the post-translocational (POST) state as the newly formed A-site-bound peptidyl-tRNA and P-site-bound deacylated tRNA move to the P and E sites, respectively. Catalyzes the coordinated movement of the two tRNA molecules, the mRNA and conformational changes in the ribosome. The protein is Elongation factor G of Campylobacter lari (strain RM2100 / D67 / ATCC BAA-1060).